The chain runs to 817 residues: Lon protease 1 (817 aa).

The 199-residue stretch at 18–216 folds into the Lon N-terminal domain; it reads VPLLPLRDII…KLYELMQGEI (199 aa). 368 to 375 is a binding site for ATP; it reads GPPGVGKT. Positions 604–785 constitute a Lon proteolytic domain; that stretch reads EDQVGIVTGL…DDVLREALVL (182 aa). Residues Ser691 and Lys734 contribute to the active site. Residues 789–817 form a disordered region; the sequence is EEFGRKPTTDGGKLGGTTELPASPAVAPA.

The protein belongs to the peptidase S16 family. Homohexamer. Organized in a ring with a central cavity.

The protein localises to the cytoplasm. It carries out the reaction Hydrolysis of proteins in presence of ATP.. In terms of biological role, ATP-dependent serine protease that mediates the selective degradation of mutant and abnormal proteins as well as certain short-lived regulatory proteins. Required for cellular homeostasis and for survival from DNA damage and developmental changes induced by stress. Degrades polypeptides processively to yield small peptide fragments that are 5 to 10 amino acids long. Binds to DNA in a double-stranded, site-specific manner. This Myxococcus xanthus protein is Lon protease 1.